The primary structure comprises 192 residues: Adenine phosphoribosyltransferase (192 aa).

Belongs to the purine/pyrimidine phosphoribosyltransferase family. In terms of assembly, homodimer.

The protein localises to the cytoplasm. It catalyses the reaction AMP + diphosphate = 5-phospho-alpha-D-ribose 1-diphosphate + adenine. It participates in purine metabolism; AMP biosynthesis via salvage pathway; AMP from adenine: step 1/1. Functionally, catalyzes a salvage reaction resulting in the formation of AMP, that is energically less costly than de novo synthesis. The sequence is that of Adenine phosphoribosyltransferase from Corynebacterium efficiens (strain DSM 44549 / YS-314 / AJ 12310 / JCM 11189 / NBRC 100395).